The following is a 72-amino-acid chain: UPF0270 protein YheU (72 aa).

Belongs to the UPF0270 family.

This is UPF0270 protein YheU from Escherichia coli (strain UTI89 / UPEC).